Reading from the N-terminus, the 475-residue chain is ATP synthase subunit beta (475 aa).

160 to 167 (GGAGVGKT) serves as a coordination point for ATP.

Belongs to the ATPase alpha/beta chains family. F-type ATPases have 2 components, CF(1) - the catalytic core - and CF(0) - the membrane proton channel. CF(1) has five subunits: alpha(3), beta(3), gamma(1), delta(1), epsilon(1). CF(0) has three main subunits: a(1), b(2) and c(9-12). The alpha and beta chains form an alternating ring which encloses part of the gamma chain. CF(1) is attached to CF(0) by a central stalk formed by the gamma and epsilon chains, while a peripheral stalk is formed by the delta and b chains.

Its subcellular location is the cell membrane. It catalyses the reaction ATP + H2O + 4 H(+)(in) = ADP + phosphate + 5 H(+)(out). In terms of biological role, produces ATP from ADP in the presence of a proton gradient across the membrane. The catalytic sites are hosted primarily by the beta subunits. This chain is ATP synthase subunit beta, found in Mycolicibacterium vanbaalenii (strain DSM 7251 / JCM 13017 / BCRC 16820 / KCTC 9966 / NRRL B-24157 / PYR-1) (Mycobacterium vanbaalenii).